A 169-amino-acid chain; its full sequence is Peptide deformylase (169 aa).

Fe cation-binding residues include C91 and H133. E134 is an active-site residue. A Fe cation-binding site is contributed by H137.

It belongs to the polypeptide deformylase family. It depends on Fe(2+) as a cofactor.

It catalyses the reaction N-terminal N-formyl-L-methionyl-[peptide] + H2O = N-terminal L-methionyl-[peptide] + formate. Removes the formyl group from the N-terminal Met of newly synthesized proteins. Requires at least a dipeptide for an efficient rate of reaction. N-terminal L-methionine is a prerequisite for activity but the enzyme has broad specificity at other positions. The sequence is that of Peptide deformylase from Klebsiella pneumoniae (strain 342).